A 546-amino-acid polypeptide reads, in one-letter code: CTP synthase (546 aa).

The interval 1–269 is amidoligase domain; sequence MNSNTKIIFV…DAKLVELLNL (269 aa). Position 16 (Ser-16) interacts with CTP. Ser-16 lines the UTP pocket. ATP contacts are provided by residues 17-22 and Asp-74; that span reads SLGKGV. The Mg(2+) site is built by Asp-74 and Glu-143. CTP contacts are provided by residues 150-152, 190-195, and Lys-226; these read DIE and KTKPTQ. Residues 190–195 and Lys-226 each bind UTP; that span reads KTKPTQ. The Glutamine amidotransferase type-1 domain maps to 294 to 546; that stretch reads TIAMVGKYVS…IQAAIENSNN (253 aa). Gly-356 contacts L-glutamine. Catalysis depends on Cys-383, which acts as the Nucleophile; for glutamine hydrolysis. L-glutamine is bound by residues 384–387, Glu-407, and Arg-474; that span reads LGMQ. Active-site residues include His-519 and Glu-521.

Belongs to the CTP synthase family. In terms of assembly, homotetramer.

It catalyses the reaction UTP + L-glutamine + ATP + H2O = CTP + L-glutamate + ADP + phosphate + 2 H(+). The catalysed reaction is L-glutamine + H2O = L-glutamate + NH4(+). It carries out the reaction UTP + NH4(+) + ATP = CTP + ADP + phosphate + 2 H(+). It functions in the pathway pyrimidine metabolism; CTP biosynthesis via de novo pathway; CTP from UDP: step 2/2. Its activity is regulated as follows. Allosterically activated by GTP, when glutamine is the substrate; GTP has no effect on the reaction when ammonia is the substrate. The allosteric effector GTP functions by stabilizing the protein conformation that binds the tetrahedral intermediate(s) formed during glutamine hydrolysis. Inhibited by the product CTP, via allosteric rather than competitive inhibition. In terms of biological role, catalyzes the ATP-dependent amination of UTP to CTP with either L-glutamine or ammonia as the source of nitrogen. Regulates intracellular CTP levels through interactions with the four ribonucleotide triphosphates. The chain is CTP synthase from Francisella tularensis subsp. tularensis (strain FSC 198).